A 434-amino-acid polypeptide reads, in one-letter code: Putative nuclease OPG089 (434 aa).

Mg(2+) is bound by residues Asp33, Asp74, Glu168, Asp170, Asp196, and Asp198.

It belongs to the XPG/RAD2 endonuclease family. FEN1 subfamily. It depends on Mg(2+) as a cofactor.

The protein resides in the virion. Functionally, putative nuclease that seems to be required for double-strand break repair, homologous recombination, and production of full-length viral genomic DNA. This chain is Putative nuclease OPG089 (OPG089), found in Vaccinia virus (strain Western Reserve) (VACV).